We begin with the raw amino-acid sequence, 97 residues long: Co-chaperonin GroES (97 aa).

It belongs to the GroES chaperonin family. As to quaternary structure, heptamer of 7 subunits arranged in a ring. Interacts with the chaperonin GroEL.

The protein localises to the cytoplasm. Its function is as follows. Together with the chaperonin GroEL, plays an essential role in assisting protein folding. The GroEL-GroES system forms a nano-cage that allows encapsulation of the non-native substrate proteins and provides a physical environment optimized to promote and accelerate protein folding. GroES binds to the apical surface of the GroEL ring, thereby capping the opening of the GroEL channel. The sequence is that of Co-chaperonin GroES from Buchnera aphidicola subsp. Cinara cedri (strain Cc).